A 159-amino-acid polypeptide reads, in one-letter code: Small ribosomal subunit protein uS7 (159 aa).

It belongs to the universal ribosomal protein uS7 family. In terms of assembly, part of the 30S ribosomal subunit. Contacts proteins S9 and S11.

Its function is as follows. One of the primary rRNA binding proteins, it binds directly to 16S rRNA where it nucleates assembly of the head domain of the 30S subunit. Is located at the subunit interface close to the decoding center, probably blocks exit of the E-site tRNA. This Wolbachia pipientis wMel protein is Small ribosomal subunit protein uS7.